Consider the following 356-residue polypeptide: GTPase Obg (356 aa).

The 159-residue stretch at 2 to 160 folds into the Obg domain; the sequence is ESFVDEVAIE…KFLRLSLKLL (159 aa). The OBG-type G domain maps to 161–329; it reads ADVGIVGLPN…LLENMDEVFF (169 aa). GTP-binding positions include 167-174, 192-196, 215-218, 282-285, and 310-312; these read GLPNAGKS, FTTLS, DIPG, NKID, and SAD. Positions 174 and 194 each coordinate Mg(2+).

Belongs to the TRAFAC class OBG-HflX-like GTPase superfamily. OBG GTPase family. Monomer. The cofactor is Mg(2+).

It localises to the cytoplasm. An essential GTPase which binds GTP, GDP and possibly (p)ppGpp with moderate affinity, with high nucleotide exchange rates and a fairly low GTP hydrolysis rate. Plays a role in control of the cell cycle, stress response, ribosome biogenesis and in those bacteria that undergo differentiation, in morphogenesis control. This is GTPase Obg from Leptospira interrogans serogroup Icterohaemorrhagiae serovar copenhageni (strain Fiocruz L1-130).